Consider the following 501-residue polypeptide: Endosomal/lysosomal proton channel TMEM175 (501 aa).

Residues 1 to 20 (MAAPRAATPGPGGGARKPEL) are disordered. The Cytoplasmic portion of the chain corresponds to 1 to 31 (MAAPRAATPGPGGGARKPELDLELGSSTQTS). A helical transmembrane segment spans residues 32–54 (HRLLAYSDALLSIIATVMILPVA). The RxxxFSD motif 1 signature appears at 33 to 39 (RLLAYSD). Over 55-75 (HTKIHPDQKLGESVQQLLLTK) the chain is Lumenal. Residues 56–61 (TKIHPD) form a short helix H1-1 region. The interval 63 to 69 (KLGESVQ) is short helix H2-1. A helical transmembrane segment spans residues 76–98 (IAVYLMTFLIVTVAWAAHVRLFQ). At 99–104 (VIELID) the chain is on the cytoplasmic side. The chain crosses the membrane as a helical span at residues 105 to 126 (DVLALLNLACMMIITFLPYTFS). At 127-136 (LMASFPGVPF) the chain is on the lumenal side. Residues 137-158 (GIFLFSVCAVVIGLIQAVIVVY) form a helical membrane-spanning segment. Over 159-182 (GFYHPHLLNQQIQVSENQNFYKRH) the chain is Cytoplasmic. A helical transmembrane segment spans residues 183 to 203 (ILKIILRGPALCFLAAIFSFF). Over 204–208 (FIPLS) the chain is Lumenal. The chain crosses the membrane as a helical span at residues 209–228 (YLLLGLVIVFPHLSRFITWC). Topologically, residues 229 to 257 (KTKIVGHRDEEEASYSLETFSFYLSEPLS) are cytoplasmic. A helical membrane pass occupies residues 258 to 282 (KERVEAFSDGVYAIVATLLILDICE). Residues 260–266 (RVEAFSD) carry the RxxxFSD motif 2 motif. Residues 283–309 (DNVPDPREVGEKFHGSLLEALSEYGPN) lie on the Lumenal side of the membrane. The interval 288–296 (PREVGEKFH) is short helix H1-2. The tract at residues 298 to 304 (SLLEALS) is short helix H2-2. The chain crosses the membrane as a helical span at residues 310 to 332 (YLAYFGSFVTIGLLWFVHHSLFL). Over 333 to 338 (YVTKAT) the chain is Cytoplasmic. A helical membrane pass occupies residues 339-360 (RLMGLLNILSLAFIGGLPLAYQ). Residues 361 to 375 (LTSEFAEKSHNEIEA) lie on the Lumenal side of the membrane. A helical transmembrane segment spans residues 376–396 (IQVSCVITFFASIFQFAIWTT). At 397–416 (ALLHERETLHPFARYGGKEH) the chain is on the cytoplasmic side. A helical membrane pass occupies residues 417-440 (AFMFAKLALYPCVSLGAFFLTCLL). Residues 441–442 (SE) lie on the Lumenal side of the membrane. The helical transmembrane segment at 443-469 (FSTEIFHLMQIVIPFAFLALRIFVRIS) threads the bilayer. The Cytoplasmic portion of the chain corresponds to 470–501 (LTVIKSVMSLSRRKVVLLEEEEACLSPTETHS).

This sequence belongs to the TMEM175 family. Homodimer.

Its subcellular location is the endosome membrane. The protein resides in the lysosome membrane. It carries out the reaction H(+)(in) = H(+)(out). It catalyses the reaction K(+)(in) = K(+)(out). Active at low pH (under pH 4.6): proton channel activity is activated by luminal side protons. Polyunsaturated fatty acids, such as arachidonic acid, also activate the channel activity. Proton-activated proton channel that catalyzes proton efflux from endosomes and lysosomes to maintain a steady-state pH. Activated at low pH (under pH 4.6) by luminal side protons: selectively mediates lysosomal proton release from lysosomes, eliciting a proton leak that balances V-ATPase activity to maintain pH homeostasis. Regulation of lumenal pH stability is required for autophagosome-lysosome fusion. Also acts as a potassium channel at higher pH, regulating potassium conductance in endosomes and lysosomes. In Gallus gallus (Chicken), this protein is Endosomal/lysosomal proton channel TMEM175.